The following is a 220-amino-acid chain: UPF0758 protein Asuc_0013 (220 aa).

Positions 98 to 220 (EFTNPLTVRL…YFSFAEQDWL (123 aa)) constitute an MPN domain. Residues His-169, His-171, and Asp-182 each contribute to the Zn(2+) site. The JAMM motif signature appears at 169-182 (HNHPSGSAEPSASD).

The protein belongs to the UPF0758 family.

In Actinobacillus succinogenes (strain ATCC 55618 / DSM 22257 / CCUG 43843 / 130Z), this protein is UPF0758 protein Asuc_0013.